The following is a 205-amino-acid chain: Ribosome maturation factor RimP (205 aa).

Residues 1–12 are compositionally biased toward polar residues; the sequence is MSNAEAQASSDH. Disordered stretches follow at residues 1 to 24 and 186 to 205; these read MSNA…APAH and FSHL…SEEA.

This sequence belongs to the RimP family.

The protein resides in the cytoplasm. In terms of biological role, required for maturation of 30S ribosomal subunits. The protein is Ribosome maturation factor RimP of Pseudarthrobacter chlorophenolicus (strain ATCC 700700 / DSM 12829 / CIP 107037 / JCM 12360 / KCTC 9906 / NCIMB 13794 / A6) (Arthrobacter chlorophenolicus).